The chain runs to 956 residues: Outer capsid protein VP2 (956 aa).

The protein belongs to the orbivirus VP2 family.

Its subcellular location is the virion. The VP2 protein is one of the two proteins (with VP5) which constitute the virus particle outer capsid. It is the major target of the host immunogenic response. Responsible for viral attachment to target host cell, probably by binding to sialic acid. This attachment induces virion internalization predominantly through clathrin-dependent endocytosis. This is Outer capsid protein VP2 (Segment-2) from Bluetongue virus 10 (isolate USA) (BTV 10).